The chain runs to 308 residues: MRIVYMGTPEFAVKPLAKLISHHEVALVVTKPDAAAGRGKKVISSPVKLFAQENHLRVITPLKFNEEVYQEILAVKPEVIVVAAYGKLLPREILNIPPYGCLNIHASLLPFYRGAAPIERCLMAGEKETGITIMFMDEGLDTGDIALQEKVAINQEITGGELRKILAEIGADLIIEALKRLREGGLPRVPQDHQLATYAPPLKKEDEIIHWADSAEKIRNQIRALNPVPGAYTVFRGKKIKIWKAKVGEFSGKKPGEIIFADRKNGFLVATGERGLQILELQPEGGKKMSWESFLNGYRPLVGETFEC.

Residue 107–110 participates in (6S)-5,6,7,8-tetrahydrofolate binding; that stretch reads SLLP.

It belongs to the Fmt family.

The enzyme catalyses L-methionyl-tRNA(fMet) + (6R)-10-formyltetrahydrofolate = N-formyl-L-methionyl-tRNA(fMet) + (6S)-5,6,7,8-tetrahydrofolate + H(+). Functionally, attaches a formyl group to the free amino group of methionyl-tRNA(fMet). The formyl group appears to play a dual role in the initiator identity of N-formylmethionyl-tRNA by promoting its recognition by IF2 and preventing the misappropriation of this tRNA by the elongation apparatus. The protein is Methionyl-tRNA formyltransferase of Carboxydothermus hydrogenoformans (strain ATCC BAA-161 / DSM 6008 / Z-2901).